Consider the following 215-residue polypeptide: Peptide methionine sulfoxide reductase MsrA (215 aa).

Residue C58 is part of the active site.

The protein belongs to the MsrA Met sulfoxide reductase family.

It catalyses the reaction L-methionyl-[protein] + [thioredoxin]-disulfide + H2O = L-methionyl-(S)-S-oxide-[protein] + [thioredoxin]-dithiol. It carries out the reaction [thioredoxin]-disulfide + L-methionine + H2O = L-methionine (S)-S-oxide + [thioredoxin]-dithiol. In terms of biological role, has an important function as a repair enzyme for proteins that have been inactivated by oxidation. Catalyzes the reversible oxidation-reduction of methionine sulfoxide in proteins to methionine. This Pseudomonas savastanoi pv. phaseolicola (strain 1448A / Race 6) (Pseudomonas syringae pv. phaseolicola (strain 1448A / Race 6)) protein is Peptide methionine sulfoxide reductase MsrA.